Reading from the N-terminus, the 293-residue chain is ATP synthase gamma chain (293 aa).

It belongs to the ATPase gamma chain family. F-type ATPases have 2 components, CF(1) - the catalytic core - and CF(0) - the membrane proton channel. CF(1) has five subunits: alpha(3), beta(3), gamma(1), delta(1), epsilon(1). CF(0) has three main subunits: a, b and c.

The protein localises to the cell inner membrane. In terms of biological role, produces ATP from ADP in the presence of a proton gradient across the membrane. The gamma chain is believed to be important in regulating ATPase activity and the flow of protons through the CF(0) complex. The protein is ATP synthase gamma chain of Sinorhizobium fredii (strain NBRC 101917 / NGR234).